A 214-amino-acid chain; its full sequence is Adenylate kinase (214 aa).

10 to 15 (GAGKGT) provides a ligand contact to ATP. Positions 30-59 (STGDMFRAAIKAGTELGKQAKALMDEGKLV) are NMP. Residues Thr31, Arg36, 57 to 59 (KLV), 85 to 88 (GFPR), and Gln92 each bind AMP. Residues 122 to 159 (GRRVHQASGRSYHIVYNPPKVEGKDDVTGEDLIIRADD) are LID. ATP is bound by residues Arg123 and 132–133 (SY). Positions 156 and 167 each coordinate AMP. An ATP-binding site is contributed by Gln200.

This sequence belongs to the adenylate kinase family. As to quaternary structure, monomer.

Its subcellular location is the cytoplasm. The enzyme catalyses AMP + ATP = 2 ADP. It participates in purine metabolism; AMP biosynthesis via salvage pathway; AMP from ADP: step 1/1. Its function is as follows. Catalyzes the reversible transfer of the terminal phosphate group between ATP and AMP. Plays an important role in cellular energy homeostasis and in adenine nucleotide metabolism. It may be linked to the biosynthesis of lipopolysaccharide surface molecules, which are important for the pathogenesis of H.influenzae. The protein is Adenylate kinase of Haemophilus influenzae (strain ATCC 51907 / DSM 11121 / KW20 / Rd).